The sequence spans 257 residues: ADP-dependent (S)-NAD(P)H-hydrate dehydratase (257 aa).

Residues 1–257 (MGRLQRTLSN…VIERIPDTIR (257 aa)) form the YjeF C-terminal domain. AMP is bound at residue glycine 200. Aspartate 201 is a (6S)-NADPHX binding site.

Belongs to the NnrD/CARKD family. Homotetramer. Requires Mg(2+) as cofactor.

It catalyses the reaction (6S)-NADHX + ADP = AMP + phosphate + NADH + H(+). The enzyme catalyses (6S)-NADPHX + ADP = AMP + phosphate + NADPH + H(+). In terms of biological role, catalyzes the dehydration of the S-form of NAD(P)HX at the expense of ADP, which is converted to AMP. Together with NAD(P)HX epimerase, which catalyzes the epimerization of the S- and R-forms, the enzyme allows the repair of both epimers of NAD(P)HX, a damaged form of NAD(P)H that is a result of enzymatic or heat-dependent hydration. This Haloterrigena turkmenica (strain ATCC 51198 / DSM 5511 / JCM 9101 / NCIMB 13204 / VKM B-1734 / 4k) (Halococcus turkmenicus) protein is ADP-dependent (S)-NAD(P)H-hydrate dehydratase.